Here is a 384-residue protein sequence, read N- to C-terminus: Putative glutamate--cysteine ligase 2 (384 aa).

Belongs to the glutamate--cysteine ligase type 2 family. YbdK subfamily.

It catalyses the reaction L-cysteine + L-glutamate + ATP = gamma-L-glutamyl-L-cysteine + ADP + phosphate + H(+). Functionally, ATP-dependent carboxylate-amine ligase which exhibits weak glutamate--cysteine ligase activity. The chain is Putative glutamate--cysteine ligase 2 from Ruegeria pomeroyi (strain ATCC 700808 / DSM 15171 / DSS-3) (Silicibacter pomeroyi).